We begin with the raw amino-acid sequence, 572 residues long: Potassium-transporting ATPase potassium-binding subunit (572 aa).

Helical transmembrane passes span 5–25 (LAAG…YVPL), 71–91 (VGYT…LYVL), 97–117 (VLPL…NTAV), 142–162 (GLAV…VALI), 188–208 (ILLP…TIQS), 258–278 (PTPL…VCLT), 292–312 (LTVL…VTWA), 387–407 (GLYG…LLVG), 422–442 (ITMA…GTGI), 500–520 (LGMA…ALAG), and 548–568 (GTVL…GPIA).

This sequence belongs to the KdpA family. As to quaternary structure, the system is composed of three essential subunits: KdpA, KdpB and KdpC.

It is found in the cell membrane. Part of the high-affinity ATP-driven potassium transport (or Kdp) system, which catalyzes the hydrolysis of ATP coupled with the electrogenic transport of potassium into the cytoplasm. This subunit binds the extracellular potassium ions and delivers the ions to the membrane domain of KdpB through an intramembrane tunnel. This is Potassium-transporting ATPase potassium-binding subunit from Mycobacteroides abscessus (strain ATCC 19977 / DSM 44196 / CCUG 20993 / CIP 104536 / JCM 13569 / NCTC 13031 / TMC 1543 / L948) (Mycobacterium abscessus).